The sequence spans 389 residues: tRNA-specific 2-thiouridylase MnmA (389 aa).

Residues 35–42 and M61 contribute to the ATP site; that span reads GMSGGVDS. Positions 121–123 are interaction with target base in tRNA; that stretch reads NPD. The active-site Nucleophile is the C126. C126 and C223 are joined by a disulfide. G151 contacts ATP. The tract at residues 173–175 is interaction with tRNA; that stretch reads KDQ. C223 functions as the Cysteine persulfide intermediate in the catalytic mechanism. Positions 335 to 336 are interaction with tRNA; it reads RY.

The protein belongs to the MnmA/TRMU family.

It is found in the cytoplasm. It carries out the reaction S-sulfanyl-L-cysteinyl-[protein] + uridine(34) in tRNA + AH2 + ATP = 2-thiouridine(34) in tRNA + L-cysteinyl-[protein] + A + AMP + diphosphate + H(+). Its function is as follows. Catalyzes the 2-thiolation of uridine at the wobble position (U34) of tRNA, leading to the formation of s(2)U34. The polypeptide is tRNA-specific 2-thiouridylase MnmA (Actinobacillus succinogenes (strain ATCC 55618 / DSM 22257 / CCUG 43843 / 130Z)).